We begin with the raw amino-acid sequence, 226 residues long: Transmembrane protein 204 (226 aa).

At 1-5 (MTVQK) the chain is on the cytoplasmic side. The helical transmembrane segment at 6–26 (LVATAVLVALVSLILNNAAAF) threads the bilayer. Residues 27–103 (TPNWVYQTLE…LQFDMMRACN (77 aa)) are Extracellular-facing. Residues 104 to 124 (LVATAALAVGQITFILGLTGL) traverse the membrane as a helical segment. The Cytoplasmic portion of the chain corresponds to 125–136 (PLMSPESQCWEE). Residues 137–157 (AMAAAFQLASFVLVIGLVTFY) form a helical membrane-spanning segment. Residues 158–170 (RIGPYTNLSWSCY) are Extracellular-facing. The N-linked (GlcNAc...) asparagine glycan is linked to N164. Residues 171-191 (LNIGACLLATLAAAMLIWNIL) traverse the membrane as a helical segment. The Cytoplasmic portion of the chain corresponds to 192-226 (HRREDCMAPRVIVISRSLTARFRRGLDNDYVESPC).

It localises to the cell junction. It is found in the adherens junction. The protein localises to the cell membrane. Functionally, can influence paracellular permeability. Appears to be involved in cell-cell interactions through adherens. The chain is Transmembrane protein 204 (Tmem204) from Rattus norvegicus (Rat).